A 445-amino-acid chain; its full sequence is Exodeoxyribonuclease 7 large subunit (445 aa).

It belongs to the XseA family. Heterooligomer composed of large and small subunits.

The protein localises to the cytoplasm. The enzyme catalyses Exonucleolytic cleavage in either 5'- to 3'- or 3'- to 5'-direction to yield nucleoside 5'-phosphates.. Bidirectionally degrades single-stranded DNA into large acid-insoluble oligonucleotides, which are then degraded further into small acid-soluble oligonucleotides. The polypeptide is Exodeoxyribonuclease 7 large subunit (Staphylococcus haemolyticus (strain JCSC1435)).